Consider the following 396-residue polypeptide: Elongation factor Tu (396 aa).

Residues 10–206 (KPHVNVGTIG…ALDSYIPEPE (197 aa)) enclose the tr-type G domain. The interval 19–26 (GHVDHGKT) is G1. Residue 19 to 26 (GHVDHGKT) coordinates GTP. Position 26 (T26) interacts with Mg(2+). The tract at residues 60–64 (GITIN) is G2. Residues 81–84 (DCPG) form a G3 region. Residues 81–85 (DCPGH) and 136–139 (NKAD) each bind GTP. Residues 136–139 (NKAD) form a G4 region. A G5 region spans residues 174-176 (SAL).

This sequence belongs to the TRAFAC class translation factor GTPase superfamily. Classic translation factor GTPase family. EF-Tu/EF-1A subfamily. As to quaternary structure, monomer.

It localises to the cytoplasm. It catalyses the reaction GTP + H2O = GDP + phosphate + H(+). Its function is as follows. GTP hydrolase that promotes the GTP-dependent binding of aminoacyl-tRNA to the A-site of ribosomes during protein biosynthesis. The sequence is that of Elongation factor Tu from Nitrosomonas europaea (strain ATCC 19718 / CIP 103999 / KCTC 2705 / NBRC 14298).